The sequence spans 617 residues: Lipoteichoic acid synthase-like YvgJ (617 aa).

Residues 1–10 are Cytoplasmic-facing; sequence MKGTFFHNQR. Residues 11–31 form a helical membrane-spanning segment; it reads FLCFSILFMWIKTYVIYKLGF. Residues 32-41 lie on the Extracellular side of the membrane; that stretch reads DLQIDTLLEE. Residues 42–62 form a helical membrane-spanning segment; sequence LMLLVNPLSFILPLFGIGLFL. Topologically, residues 63–68 are cytoplasmic; sequence KENKQR. The helical transmembrane segment at 69–89 threads the bilayer; sequence AFLLIANLVLTVILISNTIFY. Topologically, residues 90–115 are extracellular; that stretch reads GFYIDFITIPVLFQASNMSDMGSSVK. The chain crosses the membrane as a helical span at residues 116–136; the sequence is ELFHPLFIALFVDLVFLLLFA. Over 137–153 the chain is Cytoplasmic; that stretch reads RKTKHPQTKAAPHTIKR. The chain crosses the membrane as a helical span at residues 154–171; the sequence is YYAASCGMLLCTLALAEV. Residues 172 to 617 lie on the Extracellular side of the membrane; that stretch reads QQPKLLAHSF…LNGDLLRFSE (446 aa). Mn(2+) is bound by residues Glu-251 and Thr-293. Thr-293 is an active-site residue. His-408 contributes to the substrate binding site. Positions 467 and 468 each coordinate Mn(2+).

The protein belongs to the LTA synthase family. Proteolytically cleaved.

Its subcellular location is the cell membrane. The protein resides in the secreted. The polypeptide is Lipoteichoic acid synthase-like YvgJ (yvgJ) (Bacillus subtilis (strain 168)).